Reading from the N-terminus, the 825-residue chain is Zygotic DNA replication licensing factor mcm6-B (825 aa).

Residues 159-186 (CLDCQTLVRDVEQQFKYTQPSICRNPVC) form a C4-type zinc finger. Residues 347–554 (LYHNLCTSLF…TDYAIARRIV (208 aa)) form the MCM domain. 397–404 (GDPSTAKS) contributes to the ATP binding site. The Arginine finger motif lies at 529 to 532 (SRFD). The span at 668–679 (DQEDEHEVEEPQ) shows a compositional bias: acidic residues. The tract at residues 668 to 690 (DQEDEHEVEEPQEGINGDADVPN) is disordered.

This sequence belongs to the MCM family. As to quaternary structure, component of the mcm2-7 complex (RLF-M). The complex forms a toroidal hexameric ring with the proposed subunit order mcm2-mcm6-mcm4-mcm7-mcm3-mcm5 (By simililarity). Begins to associate with zmcm3, mcm4 and mcm7 into mcm complexes at the neurula stage.

It is found in the nucleus. The enzyme catalyses ATP + H2O = ADP + phosphate + H(+). Its function is as follows. Acts as a component of the mcm2-7 complex (mcm complex) which is the putative replicative helicase essential for 'once per cell cycle' DNA replication initiation and elongation in eukaryotic cells. The active ATPase sites in the mcm2-7 ring are formed through the interaction surfaces of two neighboring subunits such that a critical structure of a conserved arginine finger motif is provided in trans relative to the ATP-binding site of the Walker A box of the adjacent subunit. The six ATPase active sites, however, are likely to contribute differentially to the complex helicase activity. The existence of maternal and zygotic forms of mcm3 and mcm6 suggests that specific forms of mcm2-7 complexes may be used during different stages of development. May replace mmcm6 in the mcm2-7 complex. This Xenopus laevis (African clawed frog) protein is Zygotic DNA replication licensing factor mcm6-B (zmcm6-b).